Here is a 68-residue protein sequence, read N- to C-terminus: Molybdenum-pterin-binding protein 2 (68 aa).

The Mop domain maps to 2 to 68 (SISARNQLKG…VKSTDVMILA (67 aa)).

Functionally, binds one mole of molybdenum per mole of protein and contains a pterin. In Clostridium pasteurianum, this protein is Molybdenum-pterin-binding protein 2 (mopII).